We begin with the raw amino-acid sequence, 256 residues long: Kallikrein-15 (256 aa).

A signal peptide spans 1 to 16 (MWLLLTLSFLLASTAA). Residues 17 to 21 (QDGDK) constitute a propeptide, activation peptide. The region spanning 22 to 254 (LLEGDECAPH…YLEWIRETMK (233 aa)) is the Peptidase S1 domain. C47 and C63 are oxidised to a cystine. Catalysis depends on charge relay system residues H62 and D106. 3 disulfide bridges follow: C138–C215, C180–C194, and C205–C230. N-linked (GlcNAc...) asparagine glycosylation is present at N171. Residue S209 is the Charge relay system of the active site. N-linked (GlcNAc...) asparagine glycosylation occurs at N232.

Belongs to the peptidase S1 family. Kallikrein subfamily. Highest expression in the thyroid gland. Also expressed in the prostate, salivary, and adrenal glands and in the colon testis and kidney.

It is found in the secreted. Functionally, protease whose physiological substrate is not yet known. The protein is Kallikrein-15 (KLK15) of Homo sapiens (Human).